A 277-amino-acid polypeptide reads, in one-letter code: Phosphatidylglycerol--prolipoprotein diacylglyceryl transferase (277 aa).

Transmembrane regions (helical) follow at residues 22–42, 59–79, 107–127, and 133–153; these read ISIR…YIVV, LFFY…CLFY, GYEG…LWLY, and MNYM…ACFI. Residue Arg154 participates in a 1,2-diacyl-sn-glycero-3-phospho-(1'-sn-glycerol) binding. A run of 3 helical transmembrane segments spans residues 186 to 206, 216 to 236, and 251 to 271; these read PAQL…MFLY, GFFF…VEFL, and MGQW…FFYG.

It belongs to the Lgt family.

It localises to the cell inner membrane. The catalysed reaction is L-cysteinyl-[prolipoprotein] + a 1,2-diacyl-sn-glycero-3-phospho-(1'-sn-glycerol) = an S-1,2-diacyl-sn-glyceryl-L-cysteinyl-[prolipoprotein] + sn-glycerol 1-phosphate + H(+). It functions in the pathway protein modification; lipoprotein biosynthesis (diacylglyceryl transfer). In terms of biological role, catalyzes the transfer of the diacylglyceryl group from phosphatidylglycerol to the sulfhydryl group of the N-terminal cysteine of a prolipoprotein, the first step in the formation of mature lipoproteins. In Bacteroides fragilis (strain ATCC 25285 / DSM 2151 / CCUG 4856 / JCM 11019 / LMG 10263 / NCTC 9343 / Onslow / VPI 2553 / EN-2), this protein is Phosphatidylglycerol--prolipoprotein diacylglyceryl transferase.